The chain runs to 83 residues: MSGNTGERPFADIITSIRYWVIHSITIPSLFIAGWLFVSTGLAYDVFGTPRPNEYFTADRQEVPLITGRFNSLEQLNEITKSL.

The chain crosses the membrane as a helical span at residues V21–W35. H23 provides a ligand contact to heme.

It belongs to the PsbE/PsbF family. As to quaternary structure, heterodimer of an alpha subunit and a beta subunit. PSII is composed of 1 copy each of membrane proteins PsbA, PsbB, PsbC, PsbD, PsbE, PsbF, PsbH, PsbI, PsbJ, PsbK, PsbL, PsbM, PsbT, PsbX, PsbY, PsbZ, Psb30/Ycf12, at least 3 peripheral proteins of the oxygen-evolving complex and a large number of cofactors. It forms dimeric complexes. It depends on heme b as a cofactor.

It is found in the plastid. It localises to the chloroplast thylakoid membrane. Its function is as follows. This b-type cytochrome is tightly associated with the reaction center of photosystem II (PSII). PSII is a light-driven water:plastoquinone oxidoreductase that uses light energy to abstract electrons from H(2)O, generating O(2) and a proton gradient subsequently used for ATP formation. It consists of a core antenna complex that captures photons, and an electron transfer chain that converts photonic excitation into a charge separation. The chain is Cytochrome b559 subunit alpha from Chaetosphaeridium globosum (Charophycean green alga).